The primary structure comprises 334 residues: Glutaminase (334 aa).

The substrate site is built by Ser-76, Asn-126, Glu-170, Asn-177, Tyr-201, Tyr-253, and Val-271.

Belongs to the glutaminase family. As to quaternary structure, homotetramer.

The catalysed reaction is L-glutamine + H2O = L-glutamate + NH4(+). In Nostoc sp. (strain PCC 7120 / SAG 25.82 / UTEX 2576), this protein is Glutaminase.